The primary structure comprises 495 residues: UDP-N-acetylmuramoyl-L-alanyl-D-glutamate--2,6-diaminopimelate ligase (495 aa).

Residues Leu27, Ser29, and 44–46 (HQA) contribute to the UDP-N-acetyl-alpha-D-muramoyl-L-alanyl-D-glutamate site. 116–122 (GTNGKTT) lines the ATP pocket. UDP-N-acetyl-alpha-D-muramoyl-L-alanyl-D-glutamate is bound by residues Asn157, 158–159 (TT), Ser185, Gln191, and Arg193. Lys225 carries the post-translational modification N6-carboxylysine. Meso-2,6-diaminopimelate-binding positions include Arg390, 414–417 (DNPR), Gly465, and Glu469. A Meso-diaminopimelate recognition motif motif is present at residues 414–417 (DNPR).

The protein belongs to the MurCDEF family. MurE subfamily. Mg(2+) serves as cofactor. In terms of processing, carboxylation is probably crucial for Mg(2+) binding and, consequently, for the gamma-phosphate positioning of ATP.

Its subcellular location is the cytoplasm. It catalyses the reaction UDP-N-acetyl-alpha-D-muramoyl-L-alanyl-D-glutamate + meso-2,6-diaminopimelate + ATP = UDP-N-acetyl-alpha-D-muramoyl-L-alanyl-gamma-D-glutamyl-meso-2,6-diaminopimelate + ADP + phosphate + H(+). It participates in cell wall biogenesis; peptidoglycan biosynthesis. Functionally, catalyzes the addition of meso-diaminopimelic acid to the nucleotide precursor UDP-N-acetylmuramoyl-L-alanyl-D-glutamate (UMAG) in the biosynthesis of bacterial cell-wall peptidoglycan. The chain is UDP-N-acetylmuramoyl-L-alanyl-D-glutamate--2,6-diaminopimelate ligase from Enterobacter sp. (strain 638).